Consider the following 354-residue polypeptide: Rhodopsin (354 aa).

The Extracellular segment spans residues 1–36; that stretch reads MNGTEGPYFYIPMVNTTGIVRSPYDYPQYYLVNPAA. N-linked (GlcNAc...) asparagine glycosylation is found at Asn2 and Asn15. Residues 37–61 traverse the membrane as a helical segment; sequence YAALGAYMFFLILVGFPINFLTLYV. Topologically, residues 62-73 are cytoplasmic; it reads TIEHKKLRTPLN. The helical transmembrane segment at 74–96 threads the bilayer; the sequence is YILLNLAVANLFMVFGGFTTTMY. Topologically, residues 97-110 are extracellular; it reads TSMHGYFVLGRLGC. An intrachain disulfide couples Cys110 to Cys187. A helical membrane pass occupies residues 111–133; sequence NLEGFFATLGGEIALWSLVVLAV. The 'Ionic lock' involved in activated form stabilization motif lies at 134-136; that stretch reads ERW. The Cytoplasmic segment spans residues 134-152; that stretch reads ERWMVVCKPISNFRFGENH. The helical transmembrane segment at 153 to 173 threads the bilayer; the sequence is AIMGLAMTWLMASACAVPPLV. Topologically, residues 174–202 are extracellular; it reads GWSRYIPEGMQCSCGVDYYTRAEGFNNES. N-linked (GlcNAc...) asparagine glycosylation is present at Asn200. A helical transmembrane segment spans residues 203–224; the sequence is FVVYMFCCHFMIPLIIVFFCYG. The Cytoplasmic portion of the chain corresponds to 225–252; sequence RLLCAVKEAAAAQQESETTQRAEREVTR. Residues 253–274 traverse the membrane as a helical segment; it reads MVVIMVIAFLVCWLPYASVAWW. The Extracellular segment spans residues 275 to 286; sequence IFTHQGSEFGPV. The chain crosses the membrane as a helical span at residues 287 to 308; sequence FMTIPAFFAKSSSIYNPMIYIC. Position 296 is an N6-(retinylidene)lysine (Lys296). Residues 309 to 354 are Cytoplasmic-facing; the sequence is MNKQFRNCMITTLCCGKNPFEEEEGASSTASKTEASSVSSSSVSPA. S-palmitoyl cysteine attachment occurs at residues Cys322 and Cys323. The segment at 329 to 354 is disordered; that stretch reads EEEEGASSTASKTEASSVSSSSVSPA. Residues 334–354 are compositionally biased toward low complexity; that stretch reads ASSTASKTEASSVSSSSVSPA.

This sequence belongs to the G-protein coupled receptor 1 family. Opsin subfamily. Post-translationally, phosphorylated on some or all of the serine and threonine residues present in the C-terminal region. Contains one covalently linked retinal chromophore.

It localises to the membrane. The protein localises to the cell projection. Its subcellular location is the cilium. It is found in the photoreceptor outer segment. Its function is as follows. Photoreceptor required for image-forming vision at low light intensity. While most salt water fish species use retinal as chromophore, most freshwater fish use 3-dehydroretinal, or a mixture of retinal and 3-dehydroretinal. Light-induced isomerization of 11-cis to all-trans retinal triggers a conformational change that activates signaling via G-proteins. Subsequent receptor phosphorylation mediates displacement of the bound G-protein alpha subunit by arrestin and terminates signaling. In Mullus surmuletus (Striped red mullet), this protein is Rhodopsin (rho).